Reading from the N-terminus, the 351-residue chain is tRNA-specific 2-thiouridylase MnmA 2 (351 aa).

ATP-binding positions include 13 to 20 and Phe-39; that span reads GMSGGTDS. Cys-98 (nucleophile) is an active-site residue. Cysteines 98 and 195 form a disulfide. Gly-122 is an ATP binding site. Positions 144–146 are interaction with tRNA; sequence KDQ. Catalysis depends on Cys-195, which acts as the Cysteine persulfide intermediate. The interval 301–302 is interaction with tRNA; sequence RY.

Belongs to the MnmA/TRMU family.

It localises to the cytoplasm. It catalyses the reaction S-sulfanyl-L-cysteinyl-[protein] + uridine(34) in tRNA + AH2 + ATP = 2-thiouridine(34) in tRNA + L-cysteinyl-[protein] + A + AMP + diphosphate + H(+). In terms of biological role, catalyzes the 2-thiolation of uridine at the wobble position (U34) of tRNA, leading to the formation of s(2)U34. The polypeptide is tRNA-specific 2-thiouridylase MnmA 2 (Phocaeicola vulgatus (strain ATCC 8482 / DSM 1447 / JCM 5826 / CCUG 4940 / NBRC 14291 / NCTC 11154) (Bacteroides vulgatus)).